The following is a 213-amino-acid chain: 3-demethoxyubiquinol 3-hydroxylase (213 aa).

Fe cation contacts are provided by Glu62, Glu92, His95, Glu144, Glu176, and His179.

The protein belongs to the COQ7 family. Fe cation serves as cofactor.

Its subcellular location is the cell membrane. The enzyme catalyses a 5-methoxy-2-methyl-3-(all-trans-polyprenyl)benzene-1,4-diol + AH2 + O2 = a 3-demethylubiquinol + A + H2O. It functions in the pathway cofactor biosynthesis; ubiquinone biosynthesis. Functionally, catalyzes the hydroxylation of 2-nonaprenyl-3-methyl-6-methoxy-1,4-benzoquinol during ubiquinone biosynthesis. The sequence is that of 3-demethoxyubiquinol 3-hydroxylase from Legionella pneumophila (strain Paris).